The sequence spans 158 residues: MITVIYPGTFDPITNGHLDIIQRTARLFPNVLVAVASNPNKKPLFDLATRVELVKQAVAHLPNVTVVGFLDLLADVVKERNITAIIRGVRSASDFDYELQLAHLNRLLTNGVESLFFPPSERWSYVSSTMIREIHLHHGDVSQLVPEVVFHALQNLKK.

Thr-9 contacts substrate. ATP-binding positions include 9–10 (TF) and His-17. Substrate is bound by residues Lys-41, Leu-73, and Arg-87. Residues 88–90 (GVR), Glu-98, and 123–129 (WSYVSST) each bind ATP.

This sequence belongs to the bacterial CoaD family. Homohexamer. Requires Mg(2+) as cofactor.

It localises to the cytoplasm. It carries out the reaction (R)-4'-phosphopantetheine + ATP + H(+) = 3'-dephospho-CoA + diphosphate. It functions in the pathway cofactor biosynthesis; coenzyme A biosynthesis; CoA from (R)-pantothenate: step 4/5. Reversibly transfers an adenylyl group from ATP to 4'-phosphopantetheine, yielding dephospho-CoA (dPCoA) and pyrophosphate. The polypeptide is Phosphopantetheine adenylyltransferase (Pasteurella multocida (strain Pm70)).